The sequence spans 123 residues: Angiogenin-2 (123 aa).

Pyrrolidone carboxylic acid is present on Gln-1. His-12 acts as the Proton acceptor in catalysis. Intrachain disulfides connect Cys-25/Cys-80, Cys-38/Cys-91, and Cys-56/Cys-106. Positions Glu-30–Met-34 match the Nucleolar localization signal motif. A glycan (N-linked (GlcNAc...) asparagine) is linked at Asn-33. Zn(2+) is bound by residues Asp-40, His-82, and His-113. His-113 functions as the Proton donor in the catalytic mechanism.

It belongs to the pancreatic ribonuclease family. As to expression, serum and milk.

It localises to the cytoplasmic vesicle. The protein resides in the secretory vesicle lumen. The protein localises to the secreted. Its subcellular location is the nucleus. It is found in the nucleolus. Its activity is regulated as follows. Divalent metal ions, such as Cu2+ and Zn2+, may inhibit the ribonucleolytic activity. Binds tightly to placental ribonuclease inhibitor and has very low ribonuclease activity. Has potent angiogenic activity. Angiogenin induces vascularization of normal and malignant tissues. Abolishes protein synthesis by specifically hydrolyzing cellular tRNAs. This is Angiogenin-2 from Bos taurus (Bovine).